Consider the following 211-residue polypeptide: MFRDGITIKGNKEGLNVIININSFKDFDEMLDAFIAKLSKGKRFYKGCTLRITTQLKEINERNTRKLKDILFDEFLIKDCIFEDSDENKSKVFSGIYEGRTKFLRRTVRSGQIIKYSGNVVIVGDVNPGSEIYAGGNVIVFGILRGDVHAGSTGNDKAIIAALRLQPKILQIANRISRAPEDDDKPDYPEVARLKGDAIIVEPYSPNKFNI.

Belongs to the MinC family. Interacts with MinD and FtsZ.

Functionally, cell division inhibitor that blocks the formation of polar Z ring septums. Rapidly oscillates between the poles of the cell to destabilize FtsZ filaments that have formed before they mature into polar Z rings. Prevents FtsZ polymerization. This is Probable septum site-determining protein MinC from Clostridium acetobutylicum (strain ATCC 824 / DSM 792 / JCM 1419 / IAM 19013 / LMG 5710 / NBRC 13948 / NRRL B-527 / VKM B-1787 / 2291 / W).